A 222-amino-acid chain; its full sequence is Protein-L-isoaspartate O-methyltransferase (222 aa).

Serine 73 is a catalytic residue.

It belongs to the methyltransferase superfamily. L-isoaspartyl/D-aspartyl protein methyltransferase family.

The protein localises to the cytoplasm. The enzyme catalyses [protein]-L-isoaspartate + S-adenosyl-L-methionine = [protein]-L-isoaspartate alpha-methyl ester + S-adenosyl-L-homocysteine. Functionally, catalyzes the methyl esterification of L-isoaspartyl residues in peptides and proteins that result from spontaneous decomposition of normal L-aspartyl and L-asparaginyl residues. It plays a role in the repair and/or degradation of damaged proteins. The protein is Protein-L-isoaspartate O-methyltransferase of Chromobacterium violaceum (strain ATCC 12472 / DSM 30191 / JCM 1249 / CCUG 213 / NBRC 12614 / NCIMB 9131 / NCTC 9757 / MK).